Consider the following 665-residue polypeptide: Adenylate cyclase 1 (665 aa).

The disordered stretch occupies residues 1-25 (MLQRSESGFKDIESMQDSNADKPSR). A compositionally biased stretch (basic and acidic residues) spans 7–24 (SGFKDIESMQDSNADKPS). Transmembrane regions (helical) follow at residues 33-53 (SLLG…LVGL) and 373-393 (AVSG…AHLI). The region spanning 394 to 444 (TKSLNQLTDSANRLQDLDFATPIDVSSHVAEISTLNGAMNRARDAIFTFAL) is the HAMP domain. Residues 471-603 (TAMFTDIYDF…DTVNVASRLE (133 aa)) form the Guanylate cyclase domain. Positions 476 and 520 each coordinate Mg(2+).

Belongs to the adenylyl cyclase class-3 family. Mg(2+) serves as cofactor.

It localises to the cell membrane. It carries out the reaction ATP = 3',5'-cyclic AMP + diphosphate. In terms of biological role, plays essential roles in regulation of cellular metabolism by catalyzing the synthesis of a second messenger, cAMP. This Rhizobium meliloti (strain 1021) (Ensifer meliloti) protein is Adenylate cyclase 1 (cya1).